The chain runs to 479 residues: D-aminoacyl-tRNA deacylase (479 aa).

This sequence belongs to the DtdA deacylase family. In terms of assembly, monomer. It depends on Zn(2+) as a cofactor.

It carries out the reaction a D-aminoacyl-tRNA + H2O = a tRNA + a D-alpha-amino acid + H(+). The enzyme catalyses glycyl-tRNA(Ala) + H2O = tRNA(Ala) + glycine + H(+). In terms of biological role, D-aminoacyl-tRNA deacylase with broad substrate specificity. By recycling D-aminoacyl-tRNA to D-amino acids and free tRNA molecules, this enzyme counteracts the toxicity associated with the formation of D-aminoacyl-tRNA entities in vivo. The polypeptide is D-aminoacyl-tRNA deacylase (Methanococcoides burtonii (strain DSM 6242 / NBRC 107633 / OCM 468 / ACE-M)).